Consider the following 209-residue polypeptide: uncharacterized protein (209 aa).

Residues leucine 13–aspartate 75 are a coiled coil. Positions alanine 107 to threonine 135 are disordered. The segment covering leucine 110–glutamine 119 has biased composition (polar residues). The segment covering serine 120–serine 133 has biased composition (low complexity).

The protein belongs to the asfivirus K205R family.

The protein resides in the host cytoplasm. Its function is as follows. Induces host endoplasmic reticulum stress and consequently activates autophagy and NF-kappa-B signaling pathway. In turn, may induce autophagy-mediated STING1 degradation and innate immune evasion. This is an uncharacterized protein from Ornithodoros (relapsing fever ticks).